Reading from the N-terminus, the 189-residue chain is Der GTPase-activating protein YihI (189 aa).

The segment at 1 to 81 (MARKKKTRRV…ALAKKDPRLG (81 aa)) is disordered. Composition is skewed to basic and acidic residues over residues 9 to 27 (RVSD…ELPK) and 35 to 46 (TRYELDAKARED). The segment covering 60–71 (RHSATENNNNHQ) has biased composition (polar residues).

The protein belongs to the YihI family. Interacts with Der.

In terms of biological role, a GTPase-activating protein (GAP) that modifies Der/EngA GTPase function. May play a role in ribosome biogenesis. This Pasteurella multocida (strain Pm70) protein is Der GTPase-activating protein YihI.